A 569-amino-acid chain; its full sequence is 4-hydroxy-7-methoxy-3-oxo-3,4-dihydro-2H-1,4-benzoxazin-2-yl glucoside beta-D-glucosidase 1a, chloroplastic (569 aa).

The N-terminal 50 residues, 1–50 (MALLAAATLNPTTHLSLRSRAGRNSENLWLRSAASSQKSKGRFCNLTIRA), are a transit peptide targeting the chloroplast. A beta-D-glucoside-binding positions include glutamine 92, histidine 194, and 239-240 (NE). Catalysis depends on glutamate 240, which acts as the Proton donor. Cysteine 259 and cysteine 265 are joined by a disulfide. A beta-D-glucoside-binding positions include tyrosine 383, glutamate 456, tryptophan 504, 511 to 512 (EW), and phenylalanine 520. The active-site Nucleophile is glutamate 456.

Belongs to the glycosyl hydrolase 1 family. Homo- and heterohexamers. As to expression, expressed in young seedlings early after germination.

Its subcellular location is the plastid. The protein localises to the chloroplast. It carries out the reaction Hydrolysis of terminal, non-reducing beta-D-glucosyl residues with release of beta-D-glucose.. It catalyses the reaction DIMBOA beta-D-glucoside + H2O = DIMBOA + D-glucose. The catalysed reaction is DIBOA beta-D-glucoside + H2O = DIBOA + D-glucose. Its function is as follows. Acts in defense of young plant parts against pests via the production of hydroxamic acids from hydroxamic acid glucosides. Enzymatic activity is highly correlated with plant growth. The preferred substrate is DIMBOA-beta-D-glucoside. This chain is 4-hydroxy-7-methoxy-3-oxo-3,4-dihydro-2H-1,4-benzoxazin-2-yl glucoside beta-D-glucosidase 1a, chloroplastic (GLU1A), found in Triticum aestivum (Wheat).